A 178-amino-acid chain; its full sequence is ATP-dependent protease subunit HslV (178 aa).

Residue T7 is part of the active site. Na(+) contacts are provided by G162, C165, and T168.

Belongs to the peptidase T1B family. HslV subfamily. In terms of assembly, a double ring-shaped homohexamer of HslV is capped on each side by a ring-shaped HslU homohexamer. The assembly of the HslU/HslV complex is dependent on binding of ATP.

It is found in the cytoplasm. The enzyme catalyses ATP-dependent cleavage of peptide bonds with broad specificity.. With respect to regulation, allosterically activated by HslU binding. Its function is as follows. Protease subunit of a proteasome-like degradation complex believed to be a general protein degrading machinery. This chain is ATP-dependent protease subunit HslV, found in Burkholderia ambifaria (strain MC40-6).